Reading from the N-terminus, the 571-residue chain is Potassium-transporting ATPase potassium-binding subunit (571 aa).

Helical transmembrane passes span G5 to S25, L64 to I84, G136 to I156, L179 to P199, L254 to F274, W285 to A305, F330 to V350, F357 to I376, M421 to V441, L488 to G508, and G527 to F547.

Belongs to the KdpA family. The system is composed of three essential subunits: KdpA, KdpB and KdpC.

The protein resides in the cell inner membrane. Functionally, part of the high-affinity ATP-driven potassium transport (or Kdp) system, which catalyzes the hydrolysis of ATP coupled with the electrogenic transport of potassium into the cytoplasm. This subunit binds the periplasmic potassium ions and delivers the ions to the membrane domain of KdpB through an intramembrane tunnel. In Methylobacterium radiotolerans (strain ATCC 27329 / DSM 1819 / JCM 2831 / NBRC 15690 / NCIMB 10815 / 0-1), this protein is Potassium-transporting ATPase potassium-binding subunit.